A 103-amino-acid polypeptide reads, in one-letter code: MYAVIKTGGKQYTVKEGDVLKIEMLPENVGNEIKFSEVLMLVDGDKVTCGAPFVAKATVKAEVLDHGRHKKVKIIKFRRRKHHMKQMGHRQYYSQVKITAIGK.

It belongs to the bacterial ribosomal protein bL21 family. In terms of assembly, part of the 50S ribosomal subunit. Contacts protein L20.

This protein binds to 23S rRNA in the presence of protein L20. The sequence is that of Large ribosomal subunit protein bL21 from Legionella pneumophila (strain Lens).